Consider the following 377-residue polypeptide: Chaperone protein DnaJ (377 aa).

A J domain is found at 5–69 (EYYDRLGVSK…QKRAAYDQYG (65 aa)). A CR-type zinc finger spans residues 133–215 (GTEKEVHYNR…CHGTGHEKQS (83 aa)). 8 residues coordinate Zn(2+): Cys-146, Cys-149, Cys-163, Cys-166, Cys-189, Cys-192, Cys-203, and Cys-206. CXXCXGXG motif repeat units lie at residues 146 to 153 (CHTCNGSG), 163 to 170 (CSKCHGSG), 189 to 196 (CDVCHGTG), and 203 to 210 (CPTCHGTG).

This sequence belongs to the DnaJ family. Homodimer. Zn(2+) serves as cofactor.

It localises to the cytoplasm. Participates actively in the response to hyperosmotic and heat shock by preventing the aggregation of stress-denatured proteins and by disaggregating proteins, also in an autonomous, DnaK-independent fashion. Unfolded proteins bind initially to DnaJ; upon interaction with the DnaJ-bound protein, DnaK hydrolyzes its bound ATP, resulting in the formation of a stable complex. GrpE releases ADP from DnaK; ATP binding to DnaK triggers the release of the substrate protein, thus completing the reaction cycle. Several rounds of ATP-dependent interactions between DnaJ, DnaK and GrpE are required for fully efficient folding. Also involved, together with DnaK and GrpE, in the DNA replication of plasmids through activation of initiation proteins. The protein is Chaperone protein DnaJ of Streptococcus mutans serotype c (strain ATCC 700610 / UA159).